The chain runs to 98 residues: NADH-ubiquinone oxidoreductase chain 4L (98 aa).

3 consecutive transmembrane segments (helical) span residues 2-22 (PSIS…MLMF), 29-49 (SLLC…LTIL), and 61-81 (ILLL…LVMV).

The protein belongs to the complex I subunit 4L family. As to quaternary structure, core subunit of respiratory chain NADH dehydrogenase (Complex I) which is composed of 45 different subunits.

The protein resides in the mitochondrion inner membrane. The catalysed reaction is a ubiquinone + NADH + 5 H(+)(in) = a ubiquinol + NAD(+) + 4 H(+)(out). In terms of biological role, core subunit of the mitochondrial membrane respiratory chain NADH dehydrogenase (Complex I) which catalyzes electron transfer from NADH through the respiratory chain, using ubiquinone as an electron acceptor. Part of the enzyme membrane arm which is embedded in the lipid bilayer and involved in proton translocation. This Microcebus mittermeieri (Mittermeier's mouse lemur) protein is NADH-ubiquinone oxidoreductase chain 4L (MT-ND4L).